Consider the following 438-residue polypeptide: Elongation factor 1-alpha (438 aa).

Positions 5–228 constitute a tr-type G domain; that stretch reads KPHLNLVVIG…ALDSLEPPPK (224 aa). The tract at residues 14–21 is G1; it reads GHVDHGKS. 14-21 contributes to the GTP binding site; it reads GHVDHGKS. Position 21 (S21) interacts with Mg(2+). The G2 stretch occupies residues 70–74; that stretch reads GVTIA. The interval 91 to 94 is G3; the sequence is DAPG. GTP is bound by residues 91 to 95 and 153 to 156; these read DAPGH and NKMD. Positions 153 to 156 are G4; it reads NKMD. The G5 stretch occupies residues 194-196; it reads SAW.

It belongs to the TRAFAC class translation factor GTPase superfamily. Classic translation factor GTPase family. EF-Tu/EF-1A subfamily.

It is found in the cytoplasm. The enzyme catalyses GTP + H2O = GDP + phosphate + H(+). In terms of biological role, GTP hydrolase that promotes the GTP-dependent binding of aminoacyl-tRNA to the A-site of ribosomes during protein biosynthesis. The polypeptide is Elongation factor 1-alpha (Staphylothermus marinus (strain ATCC 43588 / DSM 3639 / JCM 9404 / F1)).